The primary structure comprises 367 residues: Phosphoribosylaminoimidazole-succinocarboxamide synthase (367 aa).

The protein belongs to the SAICAR synthetase family.

The catalysed reaction is 5-amino-1-(5-phospho-D-ribosyl)imidazole-4-carboxylate + L-aspartate + ATP = (2S)-2-[5-amino-1-(5-phospho-beta-D-ribosyl)imidazole-4-carboxamido]succinate + ADP + phosphate + 2 H(+). It participates in purine metabolism; IMP biosynthesis via de novo pathway; 5-amino-1-(5-phospho-D-ribosyl)imidazole-4-carboxamide from 5-amino-1-(5-phospho-D-ribosyl)imidazole-4-carboxylate: step 1/2. The chain is Phosphoribosylaminoimidazole-succinocarboxamide synthase from Shewanella pealeana (strain ATCC 700345 / ANG-SQ1).